Consider the following 460-residue polypeptide: Proline--tRNA ligase (460 aa).

The protein belongs to the class-II aminoacyl-tRNA synthetase family. ProS type 3 subfamily. In terms of assembly, homodimer.

The protein localises to the cytoplasm. The catalysed reaction is tRNA(Pro) + L-proline + ATP = L-prolyl-tRNA(Pro) + AMP + diphosphate. Its function is as follows. Catalyzes the attachment of proline to tRNA(Pro) in a two-step reaction: proline is first activated by ATP to form Pro-AMP and then transferred to the acceptor end of tRNA(Pro). The chain is Proline--tRNA ligase from Methanococcus maripaludis (strain DSM 14266 / JCM 13030 / NBRC 101832 / S2 / LL).